The chain runs to 927 residues: Nuclear factor of activated T-cells, cytoplasmic 2 (927 aa).

A disordered region spans residues 1–29; that stretch reads MDVPEPQPDPDGGDGPGHEPGGSPQDELD. Residues serine 23, serine 53, serine 54, serine 56, serine 99, serine 107, and serine 110 each carry the phosphoserine modification. Residues 111–116 form a calcineurin-binding region; that stretch reads PRIEIT. Residues 119-201 form a transactivation domain A (TAD-A) region; the sequence is HELMQAGGAL…CVSPNNAGPD (83 aa). Phosphoserine is present on residues serine 136, serine 150, serine 170, serine 173, serine 174, serine 176, serine 177, serine 179, and serine 182. The interval 163-177 is required for cytoplasmic retention of the phosphorylated form; it reads YREPLCLSPASSGSS. 2 consecutive repeat copies span residues 186 to 202 and 215 to 231. The interval 186–292 is 3 X approximate SP repeats; that stretch reads SPYTSPCVSP…PHVALQDDSI (107 aa). Disordered regions lie at residues 203–299 and 322–341; these read LCPQ…YPPT and SKIW…PSKA. Residues serine 215, serine 219, serine 223, serine 238, and serine 245 each carry the phosphoserine modification. A compositionally biased stretch (polar residues) spans 216 to 226; that stretch reads PRTSPIMSPRT. The Nuclear localization signal motif lies at 253–255; sequence KRR. 7 positions are modified to phosphoserine: serine 257, serine 270, serine 276, serine 278, serine 282, serine 328, and serine 365. Residues 267 to 277 show a composition bias toward low complexity; that stretch reads PAASPQRSRSP. A 3; approximate repeat occupies 274–290; that stretch reads SRSPSPQPSPHVALQDD. The region spanning 394 to 576 is the RHD domain; that stretch reads ASLPPLEWPL…NPIECSQRSA (183 aa). A DNA-binding region spans residues 423 to 430; the sequence is RAHYETEG. 3 positions are modified to phosphoserine: serine 757, serine 759, and serine 761. Disordered stretches follow at residues 790 to 812 and 841 to 903; these read AGSQ…QQAS and FGPS…QNLD. Residues 798–812 are compositionally biased toward polar residues; that stretch reads GSTLPHTSSASQQAS. Serine 860 carries the phosphoserine modification.

Member of the multicomponent NFATC transcription complex that consists of at least two components, a pre-existing cytoplasmic component NFATC2 and an inducible nuclear component NFATC1. Other members such as NFATC4, NFATC3 or members of the activating protein-1 family, MAF, GATA4 and Cbp/p300 can also bind the complex. The phosphorylated form specifically interacts with XPO1; which mediates nuclear export. NFATC proteins bind to DNA as monomers. Interacts with NFATC2IP. Interacts with FOXP3. Interacts with TBX21 ('Thr-302' phosphorylated form). Interacts with KAT2A. Interacts with HOMER2 and HOMER3; this interaction competes with calcineurin/PPP3CA-binding and hence prevents NFATC2 dephosphorylation and activation. Interacts with protein phosphatase PPP3CA/calcineurin A. Interacts with AKAP5 (via leucine zipper domain); this is required for NFATC2/NFAT1 recruitment to CRAC channels. In terms of processing, in resting cells, phosphorylated by NFATC-kinase on at least 18 sites in the 99-365 region. Upon cell stimulation, all these sites except Ser-245 are dephosphorylated by calcineurin. Dephosphorylation induces a conformational change that simultaneously exposes an NLS and masks an NES, which results in nuclear localization. Simultaneously, one site among Ser-53; Ser-54 and Ser-56 is phosphorylated; which is required for full transcriptional activity. Post-translationally, ubiquitinated in endothelial cells by RNF213 downstream of the non-canonical Wnt signaling pathway, leading to its degradation by the proteasome. Expressed in spleen, heart, testis, brain, placenta, muscle and pancreas. Expressed in the thymus. Expressed in the lung. Expressed in cartilage.

The protein localises to the cytoplasm. Its subcellular location is the nucleus. Functionally, plays a role in the inducible expression of cytokine genes in T cells, especially in the induction of the IL-2, IL-3, IL-4, TNF-alpha or GM-CSF. Promotes invasive migration through the activation of GPC6 expression and WNT5A signaling pathway. Is involved in the negative regulation of chondrogenesis. Recruited by AKAP5 to ORAI1 pore-forming subunit of CRAC channels in Ca(2+) signaling microdomains where store-operated Ca(2+) influx is coupled to calmodulin and calcineurin signaling and activation of NFAT-dependent transcriptional responses. This chain is Nuclear factor of activated T-cells, cytoplasmic 2 (Nfatc2), found in Mus musculus (Mouse).